The sequence spans 96 residues: Small ribosomal subunit protein bS6 (96 aa).

The protein belongs to the bacterial ribosomal protein bS6 family.

Its function is as follows. Binds together with bS18 to 16S ribosomal RNA. The sequence is that of Small ribosomal subunit protein bS6 from Heliobacterium modesticaldum (strain ATCC 51547 / Ice1).